The primary structure comprises 407 residues: 12S rRNA N(4)-cytidine methyltransferase METTL15 (407 aa).

Residues 100-102 (GGH), Asp-119, Phe-146, Asp-169, and Gln-176 contribute to the S-adenosyl-L-methionine site. Ser-358 is subject to Phosphoserine.

It belongs to the methyltransferase superfamily. RsmH family.

Its subcellular location is the mitochondrion matrix. The enzyme catalyses cytidine(839) in 12S rRNA + S-adenosyl-L-methionine = N(4)-methylcytidine(839) in 12S rRNA + S-adenosyl-L-homocysteine + H(+). In terms of biological role, N4-methylcytidine (m4C) methyltransferase responsible for the methylation of position C839 in mitochondrial 12S rRNA. Involved in the stabilization of 12S rRNA folding, therefore facilitating the assembly of the mitochondrial small ribosomal subunits. The protein is 12S rRNA N(4)-cytidine methyltransferase METTL15 of Homo sapiens (Human).